A 680-amino-acid chain; its full sequence is Coiled-coil domain-containing protein 138 (680 aa).

Residue Thr63 is modified to Phosphothreonine. A Phosphoserine modification is found at Ser64. The stretch at 260–339 forms a coiled coil; that stretch reads KEQHGTEIEH…YEFMTVQRLK (80 aa). The segment at 390-410 is disordered; sequence EPEEPGVDGGKPPAKPSQRSD. Position 484 is a phosphoserine (Ser484).

This chain is Coiled-coil domain-containing protein 138 (Ccdc138), found in Mus musculus (Mouse).